The sequence spans 309 residues: Protein FdhE homolog (309 aa).

This sequence belongs to the FdhE family.

It is found in the cytoplasm. In terms of biological role, necessary for formate dehydrogenase activity. This chain is Protein FdhE homolog, found in Yersinia enterocolitica serotype O:8 / biotype 1B (strain NCTC 13174 / 8081).